The chain runs to 249 residues: UPF0246 protein Lreu_0493 (249 aa).

This sequence belongs to the UPF0246 family.

The polypeptide is UPF0246 protein Lreu_0493 (Limosilactobacillus reuteri (strain DSM 20016) (Lactobacillus reuteri)).